A 198-amino-acid chain; its full sequence is Recombination protein RecR (198 aa).

The C4-type zinc finger occupies 58–73 (CSTCGNFTDTDPCALC). One can recognise a Toprim domain in the interval 81-175 (STICVVEQPK…KVTRIAAGIP (95 aa)).

This sequence belongs to the RecR family.

May play a role in DNA repair. It seems to be involved in an RecBC-independent recombinational process of DNA repair. It may act with RecF and RecO. The protein is Recombination protein RecR of Clostridium botulinum (strain Alaska E43 / Type E3).